Here is a 294-residue protein sequence, read N- to C-terminus: Mimecan (294 aa).

Positions 1–19 (MKTLQAAFFLVAFVPLVKP) are cleaved as a signal peptide. The N-linked (GlcNAc...) asparagine glycan is linked to asparagine 61. LRR repeat units lie at residues 108-127 (EAVPPLPKETAYLYARFNKI), 128-151 (KRIAVSDFADITTLRRIDFSGNMI), 152-175 (EEIEDGAFSKLLLLEELSLAENRL), 176-195 (VKLPVLPPKLTTFNANQNRI), 196-221 (KSRGIKNNAFKKLTNLAYLYLGHNAL), 222-242 (ESVPLNLPESLRILHLQHNNI), and 243-273 (TTINDDTFCKSNNTRYIRTRMDEIRMEGNPI). N-linked (GlcNAc...) asparagine glycosylation is found at asparagine 241 and asparagine 254. A disulfide bridge links cysteine 251 with cysteine 284.

This sequence belongs to the small leucine-rich proteoglycan (SLRP) family. SLRP class III subfamily. The composition of the N-linked chains or the substitution of the N-linked sites is different between embryonic and adult tissues. Post-translationally, contains keratan sulfate.

It is found in the secreted. Its subcellular location is the extracellular space. The protein resides in the extracellular matrix. In terms of biological role, induces bone formation in conjunction with TGF-beta-1 or TGF-beta-2. This chain is Mimecan (OGN), found in Gallus gallus (Chicken).